Reading from the N-terminus, the 197-residue chain is C4-dicarboxylate transport transcriptional regulatory protein DctR (197 aa).

One can recognise a Response regulatory domain in the interval 4–120; sequence TVHIVDDEES…HIVDIALSAI (117 aa). Position 53 is a 4-aspartylphosphate (D53). Residues 128-135 form an inter-domain linker region; that stretch reads AEAQAREA. The region spanning 136–197 is the HTH luxR-type domain; the sequence is VAARRASLSA…RNIADLARMT (62 aa). Residues 160 to 179 constitute a DNA-binding region (H-T-H motif); that stretch reads NKQIAERLGIAMRTVEVHRS.

In terms of processing, phosphorylated by DctS.

It localises to the cytoplasm. In terms of biological role, member of the two-component regulatory system DctS/DctR involved in the transport of C4-dicarboxylates. DctR functions as a transcriptional repressor of genes for C4-dicarboxylate transport. This is C4-dicarboxylate transport transcriptional regulatory protein DctR (dctR) from Rhodobacter capsulatus (Rhodopseudomonas capsulata).